Here is a 216-residue protein sequence, read N- to C-terminus: Probable nicotinate-nucleotide adenylyltransferase (216 aa).

It belongs to the NadD family.

The enzyme catalyses nicotinate beta-D-ribonucleotide + ATP + H(+) = deamido-NAD(+) + diphosphate. It functions in the pathway cofactor biosynthesis; NAD(+) biosynthesis; deamido-NAD(+) from nicotinate D-ribonucleotide: step 1/1. In terms of biological role, catalyzes the reversible adenylation of nicotinate mononucleotide (NaMN) to nicotinic acid adenine dinucleotide (NaAD). The protein is Probable nicotinate-nucleotide adenylyltransferase of Klebsiella pneumoniae (strain 342).